The primary structure comprises 110 residues: Ribonuclease (110 aa).

Residue glutamate 73 is the Proton acceptor of the active site. Residue histidine 102 is the Proton donor of the active site.

Belongs to the ribonuclease N1/T1 family.

It localises to the secreted. In terms of biological role, hydrolyzes phosphodiester bonds in RNA, poly- and oligoribonucleotides resulting in 3'-nucleoside monophosphates via 2',3'-cyclophosphate intermediates. In Niallia circulans (Bacillus circulans), this protein is Ribonuclease.